The following is a 354-amino-acid chain: tRNA N6-adenosine threonylcarbamoyltransferase (354 aa).

A divalent metal cation contacts are provided by His121, His125, and Tyr142. Residues 142-146, Asp174, Gly189, Glu193, and Asn285 contribute to the substrate site; that span reads YVSGG. Residue Asp313 coordinates a divalent metal cation.

This sequence belongs to the KAE1 / TsaD family. In terms of assembly, component of the EKC/KEOPS complex composed of at least bud32, cgi121, gon7, kae1 and pcc1; the whole complex dimerizes. A divalent metal cation serves as cofactor.

Its subcellular location is the cytoplasm. The protein resides in the nucleus. It catalyses the reaction L-threonylcarbamoyladenylate + adenosine(37) in tRNA = N(6)-L-threonylcarbamoyladenosine(37) in tRNA + AMP + H(+). Functionally, component of the EKC/KEOPS complex that is required for the formation of a threonylcarbamoyl group on adenosine at position 37 (t(6)A37) in tRNAs that read codons beginning with adenine. The complex is probably involved in the transfer of the threonylcarbamoyl moiety of threonylcarbamoyl-AMP (TC-AMP) to the N6 group of A37. Kae1 likely plays a direct catalytic role in this reaction, but requires other protein(s) of the complex to fulfill this activity. The EKC/KEOPS complex also promotes both telomere uncapping and telomere elongation. The complex is required for efficient recruitment of transcriptional coactivators. In Neurospora crassa (strain ATCC 24698 / 74-OR23-1A / CBS 708.71 / DSM 1257 / FGSC 987), this protein is tRNA N6-adenosine threonylcarbamoyltransferase (gpe-1).